Consider the following 284-residue polypeptide: 3-methyl-2-oxobutanoate hydroxymethyltransferase 2 (284 aa).

Mg(2+)-binding residues include D49 and D88. Residues 49-50, D88, and K118 each bind 3-methyl-2-oxobutanoate; that span reads DS. E120 is a binding site for Mg(2+). The active-site Proton acceptor is E187.

Belongs to the PanB family. In terms of assembly, homodecamer; pentamer of dimers. Mg(2+) serves as cofactor.

It localises to the cytoplasm. It carries out the reaction 3-methyl-2-oxobutanoate + (6R)-5,10-methylene-5,6,7,8-tetrahydrofolate + H2O = 2-dehydropantoate + (6S)-5,6,7,8-tetrahydrofolate. Its pathway is cofactor biosynthesis; (R)-pantothenate biosynthesis; (R)-pantoate from 3-methyl-2-oxobutanoate: step 1/2. Catalyzes the reversible reaction in which hydroxymethyl group from 5,10-methylenetetrahydrofolate is transferred onto alpha-ketoisovalerate to form ketopantoate. The chain is 3-methyl-2-oxobutanoate hydroxymethyltransferase 2 from Burkholderia cenocepacia (strain HI2424).